The following is a 50-amino-acid chain: Phospholipase A2 trimorphin (50 aa).

Positions 28, 30, and 32 each coordinate Ca(2+). C29 and C45 form a disulfide bridge. The active site involves H48. D49 contributes to the Ca(2+) binding site.

Ca(2+) is required as a cofactor. In terms of tissue distribution, expressed by the venom gland.

Its subcellular location is the secreted. It catalyses the reaction a 1,2-diacyl-sn-glycero-3-phosphocholine + H2O = a 1-acyl-sn-glycero-3-phosphocholine + a fatty acid + H(+). With respect to regulation, inhibited by EDTA. PLA2 catalyzes the calcium-dependent hydrolysis of the 2-acyl groups in 3-sn-phosphoglycerides. The protein is Phospholipase A2 trimorphin of Trimorphodon lambda (Sonoran lyre snake).